The sequence spans 376 residues: N-acetyldiaminopimelate deacetylase (376 aa).

Asp70 is a catalytic residue. Glu129 (proton acceptor) is an active-site residue.

It belongs to the peptidase M20A family. N-acetyldiaminopimelate deacetylase subfamily.

It catalyses the reaction N-acetyl-(2S,6S)-2,6-diaminopimelate + H2O = (2S,6S)-2,6-diaminopimelate + acetate. It participates in amino-acid biosynthesis; L-lysine biosynthesis via DAP pathway; LL-2,6-diaminopimelate from (S)-tetrahydrodipicolinate (acetylase route): step 3/3. In terms of biological role, catalyzes the conversion of N-acetyl-diaminopimelate to diaminopimelate and acetate. This Bacillus pumilus (strain SAFR-032) protein is N-acetyldiaminopimelate deacetylase.